A 751-amino-acid chain; its full sequence is MATLPPRKSQTPTRICISKQHLTPLQTLLQMGFPRHRAEKALASTGNRGVQIASDWLLAHVNDGTLDECAPREYIIYACPTGPFLQQLEEFWAKSRQMCGWNGAHNYVPHITLVSFFKAPDECSLQLSKALKQVVDMTGALLDRPLKLEPYMSQNFMGFFVAEEDANYLKRLALQYVKEVSNSIISDTYEQLDAIVACFPWCGAVSSGTRCIPRSSRSISLEPHVKSLHLTLAYQFPQAQFNALKALVETLDASCASNWELRLYSRDPRLATKQVQKVVYPHNPHETDELELRIGDYIYLNTEVVDSSSDGWAEGISWLTGSTGHLPVNYTERTAESDAWTLHRVVQLSKSVASSLTSAEDLDIVDGRSISTEPDDRQNTAHPDIIEGSSFEESEQSVEKYLRQTLKPCLELPSVQLLNSHNLTHQHNPNTPTIEITTNMSSSSTSMSKQPVDEILVEPPAAQPPRPDDTLSVHSDHSLHPGSLDASHAKNRKIYIMRHGERVDFTFGTWIPYCFDEFGNYMRKDLNMPKTLPRRKNSPEGWQNDSPLTNVGVYQANLIGQALLEAQVQIDHVYCSPSYRCIQTCTSALEGLKLTGKQKIKLEPGLFEWMAWYPSGVPDWLTKNELTEAKFDVDLDYEPVQPASELTARLKESTEQFYERNHDVILQLLEQTTGNILVVAHATTLDTCSRQLTGGVPRSTNELRQVIHKIPYCSLATVEQVDGVWKLVEPECLPVTHSKNPRFEWNALSAT.

A UBA domain is found at 16-60; the sequence is CISKQHLTPLQTLLQMGFPRHRAEKALASTGNRGVQIASDWLLAH. The SH3 domain maps to 271–336; that stretch reads ATKQVQKVVY…PVNYTERTAE (66 aa). Disordered regions lie at residues 367 to 394 and 458 to 484; these read GRSI…FEES and EPPA…PGSL. Basic and acidic residues predominate over residues 466 to 479; that stretch reads RPDDTLSVHSDHSL. The phosphatase-like stretch occupies residues 490–751; it reads KNRKIYIMRH…RFEWNALSAT (262 aa). Arginine 498 is a catalytic residue. The active-site Tele-phosphohistidine intermediate is the histidine 499. Histidine 681 is a catalytic residue.

The protein resides in the cytoplasm. Its subcellular location is the cytosol. The protein localises to the nucleus. It catalyses the reaction ecdysone 22-phosphate + H2O = ecdysone + phosphate. The enzyme catalyses 20-hydroxyecdysone 22-phosphate + H2O = 20-hydroxyecdysone + phosphate. The catalysed reaction is 2-deoxyecdysone 22-phosphate + H2O = 2-deoxyecdysone + phosphate. In terms of biological role, steroid phosphatase that dephosphorylates ecdysteroids such as ecdysone 22-phosphate (E22P), 3-epi-ecdysone 22-phosphate (E22P) and 3-epi-ecdysone 2-phosphate (E2P). Likely catalyzes the conversion of inactive phosphorylated ecdysteroids into their active forms. Shows high activity towards ecdysone 22-phosphate (E22P), but is also significantly active against 3-epi-ecdysone 22-phosphate (E22P) and 3-epi-ecdysone 2-phosphate (E2P). Also displays acid phosphatase activity towards 4-nitrophenyl phosphate (pNNP) in vitro. Has no activity towards 3-epi-ecdysone 3-phosphate (E3P). The sequence is that of Ecdysteroid-phosphate phosphatase from Drosophila melanogaster (Fruit fly).